An 81-amino-acid polypeptide reads, in one-letter code: U17-lycotoxin-Ls1a (81 aa).

The first 22 residues, 1–22 (MSSKVQAVLLLVGVITFLAVHA), serve as a signal peptide directing secretion. A propeptide spanning residues 23-34 (QEELSENTESER) is cleaved from the precursor. 3 cysteine pairs are disulfide-bonded: Cys36/Cys51, Cys50/Cys67, and Cys58/Cys65.

The protein belongs to the neurotoxin 02 (plectoxin) family. Expressed by the venom gland.

Its subcellular location is the secreted. The sequence is that of U17-lycotoxin-Ls1a from Lycosa singoriensis (Wolf spider).